A 256-amino-acid polypeptide reads, in one-letter code: Tyrosine-protein kinase-interacting protein (256 aa).

The span at 1–14 (MANEGEEIELTEFP) shows a compositional bias: acidic residues. Residues 1 to 49 (MANEGEEIELTEFPETEKERKDEEKLSSCSEETTNTSSSSGSDHVPVPI) form a disordered region. Residues 1 to 228 (MANEGEEIEL…DLKRLENKIN (228 aa)) are Cytoplasmic-facing. Basic and acidic residues predominate over residues 15–26 (ETEKERKDEEKL). Over residues 27–42 (SSCSEETTNTSSSSGS) the composition is skewed to low complexity. Tyr114 carries the post-translational modification Phosphotyrosine; by host LCK. Tyr127 carries the post-translational modification Phosphotyrosine; by host. Residues 146-155 (EDLQSFLEKY) form a CSKH/LBD2 region. The segment at 162-183 (PKRDLSATWDPGMPTPPLPPRP) is disordered. The tract at residues 174–183 (MPTPPLPPRP) is SH3B/LBD1. A compositionally biased stretch (pro residues) spans 174-183 (MPTPPLPPRP). Residues 229-249 (VIICLVVVILAVLLLVTVLSI) traverse the membrane as a helical segment. Residues 250 to 256 (LHIGMKS) lie on the Extracellular side of the membrane.

As to quaternary structure, binds host LCK, human WDR48 and human NXF1/TAP. Forms a complex with activated LCK and STAT1 and STAT3. Phosphorylation on Tyr-114 acts as a docking site for the recruitment of STATs 1 and 3.

It localises to the host cell membrane. Its function is as follows. Plays a critical role in virus induced T-cell transformation. Binds to T-cell-specific tyrosine kinase LCK SH2 and SH3 domains, thereby activating its kinase activity. Once phosphorylated by host LCK, forms a complex with at least STAT 1 and 3, resulting on the phosphorylation of STAT3 and presumably STAT1, and their migration into the nucleus to induce transcription of target genes. Stimulates host ILF3/NF-AT-90 activity. Association with host NXF1/TAP transduces the signal up-regulating surface expression of adhesion molecules as well as activating NF-kappa-B activity. Acts synergistically with StpC to stimulate NF-kappa-B activity and interleukin-2 gene expression. Activation of NF-kappa-B protects lymphocytes from apoptosis, thereby facilitating viral induced cell transformation. May cause down-regulation of host LCK and cell apoptosis when stably overexpressed ex vivo. Interaction with WDR48 induce degradation of T-cell receptor in a lysosome-dependent fashion, when both proteins are overexpressed. The biological effect of this interaction remains controversial since no T-cell receptor degradation is observed in infected cells. The sequence is that of Tyrosine-protein kinase-interacting protein from Saimiri sciureus (Common squirrel monkey).